The chain runs to 961 residues: Glycine dehydrogenase (decarboxylating) (961 aa).

Lys709 is subject to N6-(pyridoxal phosphate)lysine.

Belongs to the GcvP family. In terms of assembly, the glycine cleavage system is composed of four proteins: P, T, L and H. Pyridoxal 5'-phosphate serves as cofactor.

It catalyses the reaction N(6)-[(R)-lipoyl]-L-lysyl-[glycine-cleavage complex H protein] + glycine + H(+) = N(6)-[(R)-S(8)-aminomethyldihydrolipoyl]-L-lysyl-[glycine-cleavage complex H protein] + CO2. Functionally, the glycine cleavage system catalyzes the degradation of glycine. The P protein binds the alpha-amino group of glycine through its pyridoxal phosphate cofactor; CO(2) is released and the remaining methylamine moiety is then transferred to the lipoamide cofactor of the H protein. The protein is Glycine dehydrogenase (decarboxylating) of Streptomyces avermitilis (strain ATCC 31267 / DSM 46492 / JCM 5070 / NBRC 14893 / NCIMB 12804 / NRRL 8165 / MA-4680).